An 894-amino-acid polypeptide reads, in one-letter code: Leucine--tRNA ligase, mitochondrial (894 aa).

The transit peptide at 1–9 directs the protein to the mitochondrion; the sequence is MLPRPSSRF. Residues 56-66 carry the 'HIGH' region motif; the sequence is PYPSGVLHIGH. The 'KMSKS' region motif lies at 646-650; it reads KMSKS. Lysine 649 is an ATP binding site.

Belongs to the class-I aminoacyl-tRNA synthetase family.

It localises to the mitochondrion matrix. The catalysed reaction is tRNA(Leu) + L-leucine + ATP = L-leucyl-tRNA(Leu) + AMP + diphosphate. The sequence is that of Leucine--tRNA ligase, mitochondrial (NAM2) from Saccharomyces paradoxus (Yeast).